The following is a 236-amino-acid chain: Phosphoribosylaminoimidazole-succinocarboxamide synthase (236 aa).

This sequence belongs to the SAICAR synthetase family.

The catalysed reaction is 5-amino-1-(5-phospho-D-ribosyl)imidazole-4-carboxylate + L-aspartate + ATP = (2S)-2-[5-amino-1-(5-phospho-beta-D-ribosyl)imidazole-4-carboxamido]succinate + ADP + phosphate + 2 H(+). It participates in purine metabolism; IMP biosynthesis via de novo pathway; 5-amino-1-(5-phospho-D-ribosyl)imidazole-4-carboxamide from 5-amino-1-(5-phospho-D-ribosyl)imidazole-4-carboxylate: step 1/2. The chain is Phosphoribosylaminoimidazole-succinocarboxamide synthase from Hahella chejuensis (strain KCTC 2396).